The primary structure comprises 84 residues: Large ribosomal subunit protein bL31B (84 aa).

The protein belongs to the bacterial ribosomal protein bL31 family. Type B subfamily. Part of the 50S ribosomal subunit.

The chain is Large ribosomal subunit protein bL31B from Parabacteroides distasonis (strain ATCC 8503 / DSM 20701 / CIP 104284 / JCM 5825 / NCTC 11152).